We begin with the raw amino-acid sequence, 129 residues long: Large ribosomal subunit protein bL20 (129 aa).

This sequence belongs to the bacterial ribosomal protein bL20 family.

In terms of biological role, binds directly to 23S ribosomal RNA and is necessary for the in vitro assembly process of the 50S ribosomal subunit. It is not involved in the protein synthesizing functions of that subunit. The polypeptide is Large ribosomal subunit protein bL20 (Mycobacteroides abscessus (strain ATCC 19977 / DSM 44196 / CCUG 20993 / CIP 104536 / JCM 13569 / NCTC 13031 / TMC 1543 / L948) (Mycobacterium abscessus)).